The following is a 449-amino-acid chain: UDP-N-acetylmuramoylalanine--D-glutamate ligase (449 aa).

ATP is bound at residue 118 to 124 (GTNGKTT).

Belongs to the MurCDEF family.

The protein resides in the cytoplasm. It carries out the reaction UDP-N-acetyl-alpha-D-muramoyl-L-alanine + D-glutamate + ATP = UDP-N-acetyl-alpha-D-muramoyl-L-alanyl-D-glutamate + ADP + phosphate + H(+). Its pathway is cell wall biogenesis; peptidoglycan biosynthesis. Functionally, cell wall formation. Catalyzes the addition of glutamate to the nucleotide precursor UDP-N-acetylmuramoyl-L-alanine (UMA). The sequence is that of UDP-N-acetylmuramoylalanine--D-glutamate ligase from Staphylococcus carnosus (strain TM300).